Here is a 317-residue protein sequence, read N- to C-terminus: Putative methyltransferase YMR310C (317 aa).

A Phosphoserine modification is found at serine 190.

This sequence belongs to the class IV-like SAM-binding methyltransferase superfamily.

The protein localises to the nucleus. This is Putative methyltransferase YMR310C from Saccharomyces cerevisiae (strain ATCC 204508 / S288c) (Baker's yeast).